The primary structure comprises 199 residues: Imidazole glycerol phosphate synthase subunit HisH 2 (199 aa).

The Glutamine amidotransferase type-1 domain maps to 1 to 199 (MIAVIDVSGN…NNFLSLESTC (199 aa)). The active-site Nucleophile is C76. Active-site residues include H177 and E179.

In terms of assembly, heterodimer of HisH and HisF.

Its subcellular location is the cytoplasm. It catalyses the reaction 5-[(5-phospho-1-deoxy-D-ribulos-1-ylimino)methylamino]-1-(5-phospho-beta-D-ribosyl)imidazole-4-carboxamide + L-glutamine = D-erythro-1-(imidazol-4-yl)glycerol 3-phosphate + 5-amino-1-(5-phospho-beta-D-ribosyl)imidazole-4-carboxamide + L-glutamate + H(+). It carries out the reaction L-glutamine + H2O = L-glutamate + NH4(+). It functions in the pathway amino-acid biosynthesis; L-histidine biosynthesis; L-histidine from 5-phospho-alpha-D-ribose 1-diphosphate: step 5/9. In terms of biological role, IGPS catalyzes the conversion of PRFAR and glutamine to IGP, AICAR and glutamate. The HisH subunit provides the glutamine amidotransferase activity that produces the ammonia necessary to HisF for the synthesis of IGP and AICAR. The polypeptide is Imidazole glycerol phosphate synthase subunit HisH 2 (Legionella pneumophila subsp. pneumophila (strain Philadelphia 1 / ATCC 33152 / DSM 7513)).